The following is a 637-amino-acid chain: Chaperone protein DnaK (637 aa).

Thr198 bears the Phosphothreonine; by autocatalysis mark. The segment at 597–637 is disordered; sequence MYQQQAEGDAARDAAQDAAKDDVVDAEFTEVDDDKNDKKSA. Over residues 605-619 the composition is skewed to basic and acidic residues; that stretch reads DAARDAAQDAAKDDV. Residues 620–630 are compositionally biased toward acidic residues; sequence VDAEFTEVDDD.

This sequence belongs to the heat shock protein 70 family.

Its function is as follows. Acts as a chaperone. In Afipia carboxidovorans (strain ATCC 49405 / DSM 1227 / KCTC 32145 / OM5) (Oligotropha carboxidovorans), this protein is Chaperone protein DnaK.